The following is a 311-amino-acid chain: Peptide methionine sulfoxide reductase MsrA/MsrB (311 aa).

Residues 1-155 (MAEIYLAGGC…PGGYCHINVN (155 aa)) form a peptide methionine sulfoxide reductase A region. Residue Cys-10 is part of the active site. The region spanning 172 to 295 (DAELKEQLTQ…NSAALRFIPK (124 aa)) is the MsrB domain. The Nucleophile role is filled by Cys-284.

This sequence in the N-terminal section; belongs to the MsrA Met sulfoxide reductase family. The protein in the C-terminal section; belongs to the MsrB Met sulfoxide reductase family.

The enzyme catalyses L-methionyl-[protein] + [thioredoxin]-disulfide + H2O = L-methionyl-(S)-S-oxide-[protein] + [thioredoxin]-dithiol. It carries out the reaction [thioredoxin]-disulfide + L-methionine + H2O = L-methionine (S)-S-oxide + [thioredoxin]-dithiol. The catalysed reaction is L-methionyl-[protein] + [thioredoxin]-disulfide + H2O = L-methionyl-(R)-S-oxide-[protein] + [thioredoxin]-dithiol. Has an important function as a repair enzyme for proteins that have been inactivated by oxidation. Catalyzes the reversible oxidation-reduction of methionine sulfoxide in proteins to methionine. Involved in protection against oxidative stress when the bacterium enters the host bloodstream and required for maximal growth under aerobic and anaerobic conditions. The chain is Peptide methionine sulfoxide reductase MsrA/MsrB (msrAB) from Streptococcus gordonii (strain Challis / ATCC 35105 / BCRC 15272 / CH1 / DL1 / V288).